Reading from the N-terminus, the 266-residue chain is 3-oxoadipate enol-lactonase 1 (266 aa).

The 223-residue stretch at 28-250 folds into the AB hydrolase-1 domain; it reads PAIVFSNSLG…DASHLSNIEQ (223 aa).

It catalyses the reaction (4,5-dihydro-5-oxofuran-2-yl)-acetate + H2O = 3-oxoadipate + H(+). Its pathway is aromatic compound metabolism; beta-ketoadipate pathway; 3-oxoadipate from 5-oxo-4,5-dihydro-2-furylacetate: step 1/1. The protein is 3-oxoadipate enol-lactonase 1 (pcaD) of Acinetobacter baylyi (strain ATCC 33305 / BD413 / ADP1).